A 129-amino-acid chain; its full sequence is L-ectoine synthase (129 aa).

Belongs to the ectoine synthase family.

It catalyses the reaction (2S)-4-acetamido-2-aminobutanoate = L-ectoine + H2O. It functions in the pathway amine and polyamine biosynthesis; ectoine biosynthesis; L-ectoine from L-aspartate 4-semialdehyde: step 3/3. In terms of biological role, catalyzes the circularization of gamma-N-acetyl-alpha,gamma-diaminobutyric acid (ADABA) to ectoine (1,4,5,6-tetrahydro-2-methyl-4-pyrimidine carboxylic acid), which is an excellent osmoprotectant. This is L-ectoine synthase from Desulfosudis oleivorans (strain DSM 6200 / JCM 39069 / Hxd3) (Desulfococcus oleovorans).